Here is a 234-residue protein sequence, read N- to C-terminus: Opacity protein opA65 (234 aa).

Residue Ala-1 is a signal peptide. The segment at 154–179 is disordered; that stretch reads TVTPKPKNGTQGGPVKSTSPIPAYHE.

It belongs to the opacity porin family.

The protein resides in the cell outer membrane. Implicated in a number of adherence functions. OPA proteins are implicated in pathogenesis and are subject to phase variation. The chain is Opacity protein opA65 from Neisseria gonorrhoeae.